The primary structure comprises 479 residues: Tegument protein VP16 homolog (479 aa).

It belongs to the herpesviridae tegument protein VP16 protein family. As to quaternary structure, associates with the VP16-induced complex; binding to host HCFC1 activates VP16 for association with the octamer motif-binding host protein POU2F1, to form a multiprotein-DNA complex responsible for activating transcription of the viral immediate early genes.

The protein resides in the virion tegument. It localises to the host nucleus. Transcriptional activator of immediate-early (IE) gene products (alpha genes). Acts as a key activator of lytic infection by initiating the lytic program through the assembly of the transcriptional regulatory VP16-induced complex composed of VP16 and two cellular factors, HCFC1 and POU2F1. VP16-induced complex represents a regulatory switch: when it is on, it promotes IE-gene expression and thus lytic infection, and when it is off, it limits IE-gene transcription favoring latent infection. Functionally, may play a role in the aggregation of tegument proteins around nucleocapsids during virus morphogenesis. This Equus caballus (Horse) protein is Tegument protein VP16 homolog.